The primary structure comprises 151 residues: Deoxyuridine 5'-triphosphate nucleotidohydrolase (151 aa).

Residues 70–72, N83, 87–89, and M97 each bind substrate; these read RSG and LID.

This sequence belongs to the dUTPase family. Mg(2+) serves as cofactor.

The enzyme catalyses dUTP + H2O = dUMP + diphosphate + H(+). It functions in the pathway pyrimidine metabolism; dUMP biosynthesis; dUMP from dCTP (dUTP route): step 2/2. This enzyme is involved in nucleotide metabolism: it produces dUMP, the immediate precursor of thymidine nucleotides and it decreases the intracellular concentration of dUTP so that uracil cannot be incorporated into DNA. In Pseudomonas syringae pv. tomato (strain ATCC BAA-871 / DC3000), this protein is Deoxyuridine 5'-triphosphate nucleotidohydrolase.